Here is a 280-residue protein sequence, read N- to C-terminus: Nocamycin O-methyltransferase (280 aa).

This sequence belongs to the methyltransferase superfamily.

It catalyses the reaction nocamycin E + S-adenosyl-L-methionine = nocamycin I + S-adenosyl-L-homocysteine. It functions in the pathway antibiotic biosynthesis. Functionally, involved in the biosynthesis of nocamycin I and nocamycin II. Catalyzes the methylation of nocamycin E to yield nocamycin I. The chain is Nocamycin O-methyltransferase from Saccharothrix syringae (Nocardiopsis syringae).